The chain runs to 191 residues: Rho-related GTP-binding protein RhoH (191 aa).

11–18 lines the GTP pocket; that stretch reads GDSAVGKT. The short motif at 33–41 is the Effector region element; it reads YKPTVYENT. GTP is bound at residue 58–62; it reads DTAGN. Residues 73 to 86 are interaction with ZAP70; the sequence is YQQADVVLMCYSVA. 116–119 provides a ligand contact to GTP; the sequence is TQTD. Cysteine methyl ester is present on C188. C188 is lipidated: S-geranylgeranyl cysteine. Residues 189–191 constitute a propeptide, removed in mature form; that stretch reads KIL.

It belongs to the small GTPase superfamily. Rho family. As to quaternary structure, interacts with GDI1 and GDI2. Interacts with ZAP70 (via SH2 domains) and the interaction is enhanced by its phosphorylation by LCK. Interacts with SYK and the interaction is enhanced by its phosphorylation by FYN. In terms of processing, phosphorylated on tyrosine by LCK. Phosphorylated by FYN. Phosphorylation enhances the interactions with ZAP70 and SYK and is critical for its function in thymocyte development.

It is found in the cytoplasm. It localises to the cell membrane. Binds GTP but lacks intrinsic GTPase activity and is resistant to Rho-specific GTPase-activating proteins. Inhibits the activation of NF-kappa-B by TNF and IKKB and the activation of CRK/p38 by TNF. Inhibits activities of RAC1, RHOA and CDC42. Negatively regulates leukotriene production in neutrophils. Negative regulator of hematopoietic progenitor cell proliferation, survival and migration. Critical regulator of thymocyte development and T-cell antigen receptor (TCR) signaling by mediating recruitment and activation of ZAP70. Required for phosphorylation of CD3Z, membrane translocation of ZAP70 and subsequent activation of the ZAP70-mediated pathways. Essential for efficient beta-selection and positive selection by promoting the ZAP70-dependent phosphorylation of the LAT signalosome during pre-TCR and TCR signaling. Crucial for thymocyte maturation during DN3 to DN4 transition and during positive selection. Plays critical roles in mast cell function by facilitating phosphorylation of SYK in Fc epsilon RI-mediated signal transduction. Essential for the phosphorylation of LAT, LCP2, PLCG1 and PLCG2 and for Ca(2+) mobilization in mast cells. The polypeptide is Rho-related GTP-binding protein RhoH (RHOH) (Bos taurus (Bovine)).